The primary structure comprises 875 residues: Aminopeptidase M1-B (875 aa).

The interval isoleucine 96–valine 203 is required for membrane association. Substrate is bound by residues glutamate 136 and glycine 269–asparagine 273. Histidine 305 lines the Zn(2+) pocket. The active-site Proton acceptor is the glutamate 306. Zn(2+)-binding residues include histidine 309 and glutamate 328. Positions leucine 722–leucine 723 match the Dileucine internalization motif motif.

This sequence belongs to the peptidase M1 family. In terms of assembly, homodimer. Requires Zn(2+) as cofactor.

Its subcellular location is the membrane. It is found in the microsome membrane. The protein localises to the cytoplasm. It carries out the reaction Release of an N-terminal amino acid, Xaa-|-Yaa- from a peptide, amide or arylamide. Xaa is preferably Ala, but may be most amino acids including Pro (slow action). When a terminal hydrophobic residue is followed by a prolyl residue, the two may be released as an intact Xaa-Pro dipeptide.. The chain is Aminopeptidase M1-B from Oryza sativa subsp. japonica (Rice).